Consider the following 388-residue polypeptide: Succinate--CoA ligase [ADP-forming] subunit beta (388 aa).

Residues 9 to 244 (KQLFAEFGLP…PSQEDEREAH (236 aa)) enclose the ATP-grasp domain. Residues Lys46, 53–55 (GRG), Glu99, Ser102, and Glu107 contribute to the ATP site. Mg(2+) contacts are provided by Asn199 and Asp213. Substrate contacts are provided by residues Asn264 and 321-323 (GIV).

Belongs to the succinate/malate CoA ligase beta subunit family. Heterotetramer of two alpha and two beta subunits. It depends on Mg(2+) as a cofactor.

It catalyses the reaction succinate + ATP + CoA = succinyl-CoA + ADP + phosphate. It carries out the reaction GTP + succinate + CoA = succinyl-CoA + GDP + phosphate. It functions in the pathway carbohydrate metabolism; tricarboxylic acid cycle; succinate from succinyl-CoA (ligase route): step 1/1. In terms of biological role, succinyl-CoA synthetase functions in the citric acid cycle (TCA), coupling the hydrolysis of succinyl-CoA to the synthesis of either ATP or GTP and thus represents the only step of substrate-level phosphorylation in the TCA. The beta subunit provides nucleotide specificity of the enzyme and binds the substrate succinate, while the binding sites for coenzyme A and phosphate are found in the alpha subunit. The chain is Succinate--CoA ligase [ADP-forming] subunit beta from Vibrio atlanticus (strain LGP32) (Vibrio splendidus (strain Mel32)).